The following is a 340-amino-acid chain: UPF0324 membrane protein BC_5174 (340 aa).

10 helical membrane-spanning segments follow: residues 13–35 (FGFSQGIGITLLIAIAAKYLAEL), 40–59 (IMGQLVIAILIGMVWRAAIG), 99–118 (VLVIAAVVITFTIFVVYGLT), 128–150 (GILTACGTAICGAAAVVAIAPQV), 157–179 (TAVGAAIIAILGTIFTLIYTLLY), 189–211 (YGVFSGATLHEIAHVIAAAAPGG), 218–240 (AVIVKLTRVAMLVPVAILIGLWF), 255–277 (LPIPWFIFGFLAMSAVHSLGIIP), 279–301 (VVAGYIVVLAYMLIAMAMAGLGL), and 316–338 (FVAGLIGSVCLSVLGYVLVYALG).

Belongs to the UPF0324 family.

It localises to the cell membrane. This chain is UPF0324 membrane protein BC_5174, found in Bacillus cereus (strain ATCC 14579 / DSM 31 / CCUG 7414 / JCM 2152 / NBRC 15305 / NCIMB 9373 / NCTC 2599 / NRRL B-3711).